The chain runs to 314 residues: Homoserine O-succinyltransferase (314 aa).

C142 serves as the catalytic Acyl-thioester intermediate. 2 residues coordinate substrate: K163 and S192. H235 serves as the catalytic Proton acceptor. The active site involves E237. R249 serves as a coordination point for substrate.

This sequence belongs to the MetA family.

Its subcellular location is the cytoplasm. It catalyses the reaction L-homoserine + succinyl-CoA = O-succinyl-L-homoserine + CoA. It participates in amino-acid biosynthesis; L-methionine biosynthesis via de novo pathway; O-succinyl-L-homoserine from L-homoserine: step 1/1. Its function is as follows. Transfers a succinyl group from succinyl-CoA to L-homoserine, forming succinyl-L-homoserine. In Aeromonas salmonicida (strain A449), this protein is Homoserine O-succinyltransferase.